The primary structure comprises 351 residues: UDP-3-O-acylglucosamine N-acyltransferase (351 aa).

Histidine 240 serves as the catalytic Proton acceptor.

It belongs to the transferase hexapeptide repeat family. LpxD subfamily. In terms of assembly, homotrimer.

The enzyme catalyses a UDP-3-O-[(3R)-3-hydroxyacyl]-alpha-D-glucosamine + a (3R)-hydroxyacyl-[ACP] = a UDP-2-N,3-O-bis[(3R)-3-hydroxyacyl]-alpha-D-glucosamine + holo-[ACP] + H(+). It functions in the pathway bacterial outer membrane biogenesis; LPS lipid A biosynthesis. Catalyzes the N-acylation of UDP-3-O-acylglucosamine using 3-hydroxyacyl-ACP as the acyl donor. Is involved in the biosynthesis of lipid A, a phosphorylated glycolipid that anchors the lipopolysaccharide to the outer membrane of the cell. This Pseudomonas fluorescens (strain Pf0-1) protein is UDP-3-O-acylglucosamine N-acyltransferase.